We begin with the raw amino-acid sequence, 1361 residues long: uncharacterized protein (1361 aa).

The protein belongs to the IIV-6 261R/396L/443R family.

This is an uncharacterized protein from Invertebrate iridescent virus 6 (IIV-6).